The following is a 214-amino-acid chain: Redox-sensing transcriptional repressor Rex (214 aa).

Positions 17 to 56 (LYYRIFKRFYADQVEKASSKQIADAMGIDSATVRRDFSYF) form a DNA-binding region, H-T-H motif. 91–96 (GCGNIG) contacts NAD(+).

Belongs to the transcriptional regulatory Rex family. As to quaternary structure, homodimer.

The protein localises to the cytoplasm. Functionally, modulates transcription in response to changes in cellular NADH/NAD(+) redox state. The sequence is that of Redox-sensing transcriptional repressor Rex from Streptococcus equi subsp. zooepidemicus (strain H70).